A 161-amino-acid chain; its full sequence is RNA pyrophosphohydrolase (161 aa).

The 144-residue stretch at 6–149 (GYRPNVGIIL…KKDVYRRALK (144 aa)) folds into the Nudix hydrolase domain. The Nudix box motif lies at 38-59 (GGIKSDETPEEALFRELKEEVG).

This sequence belongs to the Nudix hydrolase family. RppH subfamily. Requires a divalent metal cation as cofactor.

In terms of biological role, accelerates the degradation of transcripts by removing pyrophosphate from the 5'-end of triphosphorylated RNA, leading to a more labile monophosphorylated state that can stimulate subsequent ribonuclease cleavage. The chain is RNA pyrophosphohydrolase from Marinomonas sp. (strain MWYL1).